The chain runs to 297 residues: Coiled-coil domain-containing protein 159 (297 aa).

Positions 147 to 297 (EELELVREEV…SKSGRSFPPA (151 aa)) form a coiled coil. Residues 256–297 (LRGHKGHQCLSPPLPSWDSDSDCDQDLSQPPFSKSGRSFPPA) are disordered.

In terms of assembly, interacts with DYNLT2. Interacts with GGNBP1. Interacts with OSBP2.

In terms of biological role, functions during spermatid development; may participate in the centrosome reduction procedure of spermatids and is required for the formation of the connecting piece/sperm head-tail coupling apparatus (HTCA) and the correct and tight attachment of the flagellum to the nuclear envelope. This chain is Coiled-coil domain-containing protein 159 (CCDC159), found in Homo sapiens (Human).